We begin with the raw amino-acid sequence, 464 residues long: Propanal dehydrogenase (CoA-propanoylating) (464 aa).

The targets protein to the BMC stretch occupies residues 1–18 (MNTSELETLIRTILSEQL).

It belongs to the EutE/PduP family. Interacts with BMC shell proteins PduA and PduJ, which target this protein to BMC. Interacts with PduQ, probably via the N-terminus of PduQ. Interacts with PduK, probably with its BMC-containing N-terminus.

Its subcellular location is the bacterial microcompartment. The catalysed reaction is propanal + NAD(+) + CoA = propanoyl-CoA + NADH + H(+). Its pathway is polyol metabolism; 1,2-propanediol degradation. Functionally, a CoA-acylating aldehyde dehydrogenase required for optimal 1,2-propanediol (1,2-PD) degradation. Optimizes growth in the bacterial microcompartment (BMC) dedicated to 1,2-PD degradation by minimizing propionaldehyde toxicity. Directly targeted to the BMC. NAD(+) and NADH are regenerated internally within the Pdu BMC by the PduP and PduQ enzymes, which reduce NAD(+) and oxidize NADH respectively, although there must also be cofactor transport across the BMC. The 1,2-PD-specific bacterial microcompartment (BMC) concentrates low levels of 1,2-PD catabolic enzymes, concentrates volatile reaction intermediates thus enhancing pathway flux and keeps the level of toxic, mutagenic propionaldehyde low. The protein is Propanal dehydrogenase (CoA-propanoylating) of Salmonella typhimurium (strain LT2 / SGSC1412 / ATCC 700720).